The sequence spans 150 residues: D-aminoacyl-tRNA deacylase (150 aa).

Positions 138-139 (GP) match the Gly-cisPro motif, important for rejection of L-amino acids motif.

This sequence belongs to the DTD family. As to quaternary structure, homodimer.

The protein localises to the cytoplasm. It carries out the reaction glycyl-tRNA(Ala) + H2O = tRNA(Ala) + glycine + H(+). The catalysed reaction is a D-aminoacyl-tRNA + H2O = a tRNA + a D-alpha-amino acid + H(+). An aminoacyl-tRNA editing enzyme that deacylates mischarged D-aminoacyl-tRNAs. Also deacylates mischarged glycyl-tRNA(Ala), protecting cells against glycine mischarging by AlaRS. Acts via tRNA-based rather than protein-based catalysis; rejects L-amino acids rather than detecting D-amino acids in the active site. By recycling D-aminoacyl-tRNA to D-amino acids and free tRNA molecules, this enzyme counteracts the toxicity associated with the formation of D-aminoacyl-tRNA entities in vivo and helps enforce protein L-homochirality. The chain is D-aminoacyl-tRNA deacylase from Chlorobium limicola (strain DSM 245 / NBRC 103803 / 6330).